A 444-amino-acid polypeptide reads, in one-letter code: Tol-Pal system protein TolB (444 aa).

An N-terminal signal peptide occupies residues 1 to 19; sequence MRNIIYFILSLLFSVTSYA.

Belongs to the TolB family. In terms of assembly, the Tol-Pal system is composed of five core proteins: the inner membrane proteins TolA, TolQ and TolR, the periplasmic protein TolB and the outer membrane protein Pal. They form a network linking the inner and outer membranes and the peptidoglycan layer.

Its subcellular location is the periplasm. Functionally, part of the Tol-Pal system, which plays a role in outer membrane invagination during cell division and is important for maintaining outer membrane integrity. The protein is Tol-Pal system protein TolB of Rickettsia rickettsii (strain Sheila Smith).